The following is a 193-amino-acid chain: Probable gluconokinase (193 aa).

18-25 lines the ATP pocket; it reads GTAGTGKS.

This sequence belongs to the gluconokinase GntK/GntV family.

The protein localises to the cytoplasm. It carries out the reaction D-gluconate + ATP = 6-phospho-D-gluconate + ADP + H(+). The protein operates within carbohydrate acid metabolism; D-gluconate degradation. The chain is Probable gluconokinase from Saccharomyces cerevisiae (strain ATCC 204508 / S288c) (Baker's yeast).